We begin with the raw amino-acid sequence, 293 residues long: MFKGSNVALITPFKNNELDVEAYIKLIHFQISNGTNGLVPAGTTGESPTLSHDEHQKVIDLCVKESNGKNIVIAGTGSNSTKEAISLTTHAEKAGADAALIVTPYYNKPTQEGLYQHYKAINDKCGIPIIIYNIPGRSVIDMSVDTMARLFELKNIVGVKDATGDLDRVNQQKDKMGTDFVQLTGNDDNALEFNNRGGVGSISVTANIAPKLCSDFQKASKIENNESKLEAIRLDKILQPIHSSMFIESNPSPVKYAAKLLGLCDDEVRLPLVKVTDPTKDIVKEALVSANLL.

Residue threonine 44 coordinates pyruvate. Tyrosine 132 serves as the catalytic Proton donor/acceptor. The active-site Schiff-base intermediate with substrate is the lysine 160. Position 202 (isoleucine 202) interacts with pyruvate.

The protein belongs to the DapA family. In terms of assembly, homotetramer; dimer of dimers.

It localises to the cytoplasm. It catalyses the reaction L-aspartate 4-semialdehyde + pyruvate = (2S,4S)-4-hydroxy-2,3,4,5-tetrahydrodipicolinate + H2O + H(+). Its pathway is amino-acid biosynthesis; L-lysine biosynthesis via DAP pathway; (S)-tetrahydrodipicolinate from L-aspartate: step 3/4. Functionally, catalyzes the condensation of (S)-aspartate-beta-semialdehyde [(S)-ASA] and pyruvate to 4-hydroxy-tetrahydrodipicolinate (HTPA). The chain is 4-hydroxy-tetrahydrodipicolinate synthase from Pelagibacter ubique (strain HTCC1062).